Consider the following 488-residue polypeptide: MSQISMFVRKLHKFSYNPNYKFKCGLEIHTQLKTKYKLFSLSPTSYNEPPNTKLSYFDVGLPGTQPLLNPEALLLALKASVALNCDIQSYSSFDRKHYFYADQPLGYQITQHYYPLAKNGYVQLNKFDDMPDKVISLEQVQLEQDTGKTVNYDDRINVDLNRANTPLIEVVTKPDFENIDQVQAFVRKYQLLVSHLDICTGDLETGAIRVDANISVNNNPRVEIKNLGSSGEIVDALKYEYNRQVTLLQNNGKIIQETRGWNGIATESLRKKENAVDYRYVPDSELPVIRLDKNIQAQLQNTLDELPDSVLDRLTKEPYNLQLAHARNLLFQPEILDYYENIFGRIRDANKWFFHELLAAFAKSDVEFQVDIVLPDMLVDIVSSVEKNEISLTGARIILKHIIRNKSTKTLPQLIKELDIGKPEASAELEEAINEICQQIINTNADVVEKIARGHTNALQVLIGQAMKATKGKVHAKEFRSKFMELLK.

Belongs to the GatB/GatE family. GatB subfamily. Subunit of the heterotrimeric GatFAB amidotransferase (AdT) complex, composed of A, B and F subunits.

The protein resides in the mitochondrion. It catalyses the reaction L-glutamyl-tRNA(Gln) + L-glutamine + ATP + H2O = L-glutaminyl-tRNA(Gln) + L-glutamate + ADP + phosphate + H(+). In terms of biological role, allows the formation of correctly charged Gln-tRNA(Gln) through the transamidation of misacylated Glu-tRNA(Gln) in the mitochondria. The reaction takes place in the presence of glutamine and ATP through an activated gamma-phospho-Glu-tRNA(Gln). This Candida albicans (strain SC5314 / ATCC MYA-2876) (Yeast) protein is Glutamyl-tRNA(Gln) amidotransferase subunit B, mitochondrial.